A 230-amino-acid polypeptide reads, in one-letter code: Broad-specificity phosphatase YOR283W (230 aa).

The Tele-phosphohistidine intermediate role is filled by His-24. Substrate is bound by residues 36–37 and 102–105; these read QG and ERYM. Residue Glu-102 is the Proton donor/acceptor of the active site.

This sequence belongs to the phosphoglycerate mutase family. BPG-dependent PGAM subfamily.

Its subcellular location is the cytoplasm. It localises to the nucleus. Metal-independent phosphatase active against a broad range of phosphorylated substrates including nucleoside tri- and diphosphates, phosphorylated organic acids, and amino acids. Shows no activity against phytic acid, phosphorylated carbohydrates, and nucleoside monophosphates. This Saccharomyces cerevisiae (strain ATCC 204508 / S288c) (Baker's yeast) protein is Broad-specificity phosphatase YOR283W.